Reading from the N-terminus, the 102-residue chain is Large ribosomal subunit protein bL21 (102 aa).

This sequence belongs to the bacterial ribosomal protein bL21 family. In terms of assembly, part of the 50S ribosomal subunit. Contacts protein L20.

Functionally, this protein binds to 23S rRNA in the presence of protein L20. The sequence is that of Large ribosomal subunit protein bL21 from Pseudarthrobacter chlorophenolicus (strain ATCC 700700 / DSM 12829 / CIP 107037 / JCM 12360 / KCTC 9906 / NCIMB 13794 / A6) (Arthrobacter chlorophenolicus).